The sequence spans 503 residues: Cysteine desulfurase, mitochondrial (503 aa).

The N-terminal 27 residues, 1–27 (MSNIAPQVLRHASRACSRRLSLSASLV), are a transit peptide targeting the mitochondrion. Low complexity predominate over residues 34–50 (RTVTGSGSGGRRYVSGS). The segment at 34–58 (RTVTGSGSGGRRYVSGSQRHNAQAQ) is disordered. Residues 172 to 173 (AT), N254, Q282, and 302 to 304 (SGH) contribute to the pyridoxal 5'-phosphate site. K305 bears the N6-(pyridoxal phosphate)lysine mark. T342 is a binding site for pyridoxal 5'-phosphate. C427 functions as the Cysteine persulfide intermediate in the catalytic mechanism. C427 contacts [2Fe-2S] cluster.

It belongs to the class-V pyridoxal-phosphate-dependent aminotransferase family. NifS/IscS subfamily. Pyridoxal 5'-phosphate is required as a cofactor.

The protein localises to the mitochondrion. It catalyses the reaction (sulfur carrier)-H + L-cysteine = (sulfur carrier)-SH + L-alanine. In terms of biological role, catalyzes the removal of elemental sulfur from cysteine to produce alanine. It supplies the inorganic sulfur for iron-sulfur (Fe-S) clusters. Plays a role in both tRNA-processing and mitochondrial metabolism. Involved in the 2-thio-modification of both 5-carboxymethylaminomethyl-2-thiouridine in mitochondrial tRNAs and 5-methoxycarbonylmethyl-2-thiouridine (mcm5s2U) in cytoplasmic tRNAs. The chain is Cysteine desulfurase, mitochondrial from Arthroderma benhamiae (strain ATCC MYA-4681 / CBS 112371) (Trichophyton mentagrophytes).